We begin with the raw amino-acid sequence, 136 residues long: Transcription antitermination protein NusB (136 aa).

Belongs to the NusB family.

In terms of biological role, involved in transcription antitermination. Required for transcription of ribosomal RNA (rRNA) genes. Binds specifically to the boxA antiterminator sequence of the ribosomal RNA (rrn) operons. The chain is Transcription antitermination protein NusB from Kineococcus radiotolerans (strain ATCC BAA-149 / DSM 14245 / SRS30216).